An 855-amino-acid chain; its full sequence is Glucans biosynthesis glucosyltransferase H (855 aa).

The next 6 helical transmembrane spans lie at 142–162, 196–216, 515–535, 572–592, 606–626, and 682–702; these read ILLT…KGIL, ILVL…TALM, VFLT…FLVL, LFST…ILIW, TLSM…RMIF, and FLWW…VSVI.

It belongs to the glycosyltransferase 2 family. OpgH subfamily.

It is found in the cell inner membrane. Its pathway is glycan metabolism; osmoregulated periplasmic glucan (OPG) biosynthesis. Functionally, involved in the biosynthesis of osmoregulated periplasmic glucans (OPGs). The sequence is that of Glucans biosynthesis glucosyltransferase H from Pseudomonas entomophila (strain L48).